The primary structure comprises 472 residues: F-box protein At3g03040 (472 aa).

The region spanning 1-49 is the F-box domain; the sequence is MDLLSSLPDEVRCLILSFLTTKESASTSVLSKKWRNLFALVPNLDFDDS.

This Arabidopsis thaliana (Mouse-ear cress) protein is F-box protein At3g03040.